A 363-amino-acid polypeptide reads, in one-letter code: Cytoplasmic envelopment protein 2 (363 aa).

The protein belongs to the herpesviridae cytoplasmic envelopment protein 2 family. In terms of assembly, interacts with cytoplasmic envelopment protein 3 and with the capsid.

It localises to the virion tegument. It is found in the host cytoplasm. The protein localises to the host nucleus. In terms of biological role, plays a critical role in cytoplasmic virus egress. Participates in the final step of tegumentation and envelope acquisition within the host cytoplasm by directly interacting with the capsid. Upon virion binding to target cell, a signaling cascade is triggered to disrupt the interaction with the capsid, thereby preparing capsid uncoating. In Varicella-zoster virus (strain Dumas) (HHV-3), this protein is Cytoplasmic envelopment protein 2 (44).